We begin with the raw amino-acid sequence, 259 residues long: Polycomb group RING finger protein 1 (259 aa).

The residue at position 2 (Ala2) is an N-acetylalanine. Position 3 is a phosphoserine (Ser3). Lys24 participates in a covalent cross-link: Glycyl lysine isopeptide (Lys-Gly) (interchain with G-Cter in SUMO2). The segment at 47-86 (CCLCAGYFVDATTITECLHTFCKSCIVKYLQTSKYCPMCN) adopts an RING-type zinc-finger fold. The tract at residues 86-247 (NIKIHETQPL…LSRWFGKPSP (162 aa)) is necessary for repressor activity. Lys88 participates in a covalent cross-link: Glycyl lysine isopeptide (Lys-Gly) (interchain with G-Cter in SUMO2). Residues 150–255 (LPFSSFDHSK…SPLLLQYSVK (106 aa)) form a required for the interaction with the KDM2B-SKP1 heterodimeric complex region. The tract at residues 167–255 (EQLSLCLERL…SPLLLQYSVK (89 aa)) is RING-finger and WD40-associated ubiquitin-like domain (RAWUL); sufficient for interaction with BCOR and BCORL1.

As to quaternary structure, interacts with BCORL1, forming heterodimers. The PCGF1-BCORL1 heterodimeric complex interacts with the KDM2B-SKP1 heterodimeric complex to form a homotetrameric polycomb repression complex 1 (PRC1.1). Component of the repressive BCOR complex containing a Polycomb group subcomplex at least composed of RYBP, RING1 and RNF2/RING2. Specifically interacts with BCOR, RING1 and RNF2/RING2. Component of a PRC1-like complex. Interacts with CBX6, CBX7 and CBX8. Interacts with DPPA4, NANOG, POU5F1 and RYBP.

It localises to the nucleus. Its function is as follows. Component of the Polycomb group (PcG) multiprotein BCOR complex, a complex required to maintain the transcriptionally repressive state of some genes, such as BCL6 and the cyclin-dependent kinase inhibitor, CDKN1A. Transcriptional repressor that may be targeted to the DNA by BCL6; this transcription repressor activity may be related to PKC signaling pathway. Represses CDKN1A expression by binding to its promoter, and this repression is dependent on the retinoic acid response element (RARE element). Promotes cell cycle progression and enhances cell proliferation as well. May have a positive role in tumor cell growth by down-regulating CDKN1A. Component of a Polycomb group (PcG) multiprotein PRC1-like complex, a complex class required to maintain the transcriptionally repressive state of many genes, including Hox genes, throughout development. PcG PRC1 complex acts via chromatin remodeling and modification of histones; it mediates monoubiquitination of histone H2A 'Lys-119', rendering chromatin heritably changed in its expressibility. Within the PRC1-like complex, regulates RNF2 ubiquitin ligase activity. Regulates the expression of DPPA4 and NANOG in the NT2 embryonic carcinoma cells. In Mus musculus (Mouse), this protein is Polycomb group RING finger protein 1 (Pcgf1).